The chain runs to 598 residues: Vanadium-dependent bromoperoxidase (598 aa).

Residues Phe-361, Gln-363, Asp-365, Asp-368, and Gln-370 each coordinate Ca(2+). Vanadate contacts are provided by Lys-400 and Arg-408. Residue His-480 is part of the active site. Vanadate is bound by residues Ser-485, Gly-486, His-487, Arg-547, and His-553. His-487 is an active-site residue.

It belongs to the vanadium-dependent haloperoxidase family. In terms of assembly, homododecamer. Requires Ca(2+) as cofactor. Vanadate serves as cofactor.

The catalysed reaction is RH + Br(-) + H2O2 = RBr + 2 H2O.. In terms of biological role, catalyzes the halogenation of organic substrates in the presence of hydrogen peroxide. This Corallina pilulifera (Red coralline alga) protein is Vanadium-dependent bromoperoxidase.